Reading from the N-terminus, the 321-residue chain is MKQVSLVGDVGGTNARLALCDLETGSISHSLTYSGLDYPSLEAVVRVYLDQQSLRIEQACIGIACPIDGDQVSMTNHSWAFSIKQMQENLGLKKLTIINDFTAVSMAIPVLGADDKVQLGGGLARSGKPIAVYGAGTGLGVAHLVQSCDRWLSLPGEGGHVDMASCTEQEDALIQQLRLELGHVSAERLLSGPGLVNIYKGLVTSDHRVPEILTPKQISDRALSGECHDCHRALSLFCVLMGRFAGNLALNLGTFGGVYIAGGLVPRFLEFFKASGFREAFADKGRFKEHLEAIPVYVITHSQPGLLGAGAYLRQSLGITL.

Residue 8-13 (GDVGGT) coordinates ATP.

Belongs to the bacterial glucokinase family.

Its subcellular location is the cytoplasm. The catalysed reaction is D-glucose + ATP = D-glucose 6-phosphate + ADP + H(+). This Psychromonas ingrahamii (strain DSM 17664 / CCUG 51855 / 37) protein is Glucokinase.